A 720-amino-acid polypeptide reads, in one-letter code: Protein O-mannosyl-transferase 1 (720 aa).

The next 8 helical transmembrane spans lie at 7–27 (PVSVTVEINVLLLAVTALALF), 67–87 (FGHMILALGAYLGGFDGNFVW), 105–125 (LIPALAGSFCVPLAYLVVVEL), 127–147 (YSHFSALGACALLLMENSLIV), 150–170 (RFMLLESVLIFFLLLAVLSYL), 178–198 (SFFKWFWLVICGVSCAFGIGV), 201–221 (MGMFTYFLLLSLAAVHTWQLI), and 239–259 (FLALVVLPVIMYLGFFYIHLT). 3 consecutive MIR domains span residues 291-354 (PLDV…IKDP), 365-422 (PKPV…VDIV), and 426-486 (SEKE…VEEH). 4 consecutive transmembrane segments (helical) span residues 570–590 (IVTWTTGNITLVVYCLLFLTY), 609–629 (LVLAGVVCLGGWAVNYLPFFL), 633–653 (TLFLYHYLPALTFKILQIPIV), and 670–690 (AFGGVILAVLCSVYMSYHSLS).

The protein belongs to the glycosyltransferase 39 family. Widely expressed. Has particularly strong expression in testis, ovary, brain, liver and heart.

Its subcellular location is the endoplasmic reticulum membrane. It catalyses the reaction a di-trans,poly-cis-dolichyl beta-D-mannosyl phosphate + L-seryl-[protein] = 3-O-(alpha-D-mannosyl)-L-seryl-[protein] + a di-trans,poly-cis-dolichyl phosphate + H(+). It carries out the reaction a di-trans,poly-cis-dolichyl beta-D-mannosyl phosphate + L-threonyl-[protein] = 3-O-(alpha-D-mannosyl)-L-threonyl-[protein] + a di-trans,poly-cis-dolichyl phosphate + H(+). The protein operates within protein modification; protein glycosylation. In terms of biological role, transfers mannosyl residues to the hydroxyl group of serine or threonine residues. Coexpression of both POMT1 and POMT2 is necessary for enzyme activity, expression of either POMT1 or POMT2 alone is insufficient. This chain is Protein O-mannosyl-transferase 1, found in Danio rerio (Zebrafish).